Here is a 322-residue protein sequence, read N- to C-terminus: Phosphatidylserine decarboxylase proenzyme (322 aa).

Residues aspartate 90, histidine 147, and serine 254 each act as charge relay system; for autoendoproteolytic cleavage activity in the active site. The Schiff-base intermediate with substrate; via pyruvic acid; for decarboxylase activity role is filled by serine 254. Residue serine 254 is modified to Pyruvic acid (Ser); by autocatalysis. The segment at 295–322 (VEPAPLPTEEIKAEHDASPLVDNKKDDT) is disordered. Over residues 303–322 (EEIKAEHDASPLVDNKKDDT) the composition is skewed to basic and acidic residues.

The protein belongs to the phosphatidylserine decarboxylase family. PSD-B subfamily. Prokaryotic type I sub-subfamily. As to quaternary structure, heterodimer of a large membrane-associated beta subunit and a small pyruvoyl-containing alpha subunit. Pyruvate serves as cofactor. In terms of processing, is synthesized initially as an inactive proenzyme. Formation of the active enzyme involves a self-maturation process in which the active site pyruvoyl group is generated from an internal serine residue via an autocatalytic post-translational modification. Two non-identical subunits are generated from the proenzyme in this reaction, and the pyruvate is formed at the N-terminus of the alpha chain, which is derived from the carboxyl end of the proenzyme. The autoendoproteolytic cleavage occurs by a canonical serine protease mechanism, in which the side chain hydroxyl group of the serine supplies its oxygen atom to form the C-terminus of the beta chain, while the remainder of the serine residue undergoes an oxidative deamination to produce ammonia and the pyruvoyl prosthetic group on the alpha chain. During this reaction, the Ser that is part of the protease active site of the proenzyme becomes the pyruvoyl prosthetic group, which constitutes an essential element of the active site of the mature decarboxylase.

It is found in the cell membrane. The catalysed reaction is a 1,2-diacyl-sn-glycero-3-phospho-L-serine + H(+) = a 1,2-diacyl-sn-glycero-3-phosphoethanolamine + CO2. Its pathway is phospholipid metabolism; phosphatidylethanolamine biosynthesis; phosphatidylethanolamine from CDP-diacylglycerol: step 2/2. In terms of biological role, catalyzes the formation of phosphatidylethanolamine (PtdEtn) from phosphatidylserine (PtdSer). The protein is Phosphatidylserine decarboxylase proenzyme of Salmonella agona (strain SL483).